The chain runs to 423 residues: UDP-N-acetylglucosamine 1-carboxyvinyltransferase (423 aa).

Residue 22 to 23 coordinates phosphoenolpyruvate; the sequence is KN. Arg93 contributes to the UDP-N-acetyl-alpha-D-glucosamine binding site. Catalysis depends on Cys117, which acts as the Proton donor. Cys117 carries the post-translational modification 2-(S-cysteinyl)pyruvic acid O-phosphothioketal. UDP-N-acetyl-alpha-D-glucosamine is bound by residues Asp305 and Ile327.

This sequence belongs to the EPSP synthase family. MurA subfamily.

The protein localises to the cytoplasm. The catalysed reaction is phosphoenolpyruvate + UDP-N-acetyl-alpha-D-glucosamine = UDP-N-acetyl-3-O-(1-carboxyvinyl)-alpha-D-glucosamine + phosphate. Its pathway is cell wall biogenesis; peptidoglycan biosynthesis. Its function is as follows. Cell wall formation. Adds enolpyruvyl to UDP-N-acetylglucosamine. The chain is UDP-N-acetylglucosamine 1-carboxyvinyltransferase from Acidithiobacillus ferrooxidans (strain ATCC 23270 / DSM 14882 / CIP 104768 / NCIMB 8455) (Ferrobacillus ferrooxidans (strain ATCC 23270)).